Here is a 193-residue protein sequence, read N- to C-terminus: Xanthine phosphoribosyltransferase (193 aa).

Xanthine is bound by residues Leu20 and Thr27. Residue 128–132 coordinates 5-phospho-alpha-D-ribose 1-diphosphate; it reads ANGQA. Residue Lys156 coordinates xanthine.

Belongs to the purine/pyrimidine phosphoribosyltransferase family. Xpt subfamily. As to quaternary structure, homodimer.

Its subcellular location is the cytoplasm. The enzyme catalyses XMP + diphosphate = xanthine + 5-phospho-alpha-D-ribose 1-diphosphate. Its pathway is purine metabolism; XMP biosynthesis via salvage pathway; XMP from xanthine: step 1/1. Converts the preformed base xanthine, a product of nucleic acid breakdown, to xanthosine 5'-monophosphate (XMP), so it can be reused for RNA or DNA synthesis. This Streptococcus equi subsp. zooepidemicus (strain H70) protein is Xanthine phosphoribosyltransferase.